Here is a 324-residue protein sequence, read N- to C-terminus: ATP phosphoribosyltransferase regulatory subunit (324 aa).

The protein belongs to the class-II aminoacyl-tRNA synthetase family. HisZ subfamily. In terms of assembly, heteromultimer composed of HisG and HisZ subunits.

Its subcellular location is the cytoplasm. The protein operates within amino-acid biosynthesis; L-histidine biosynthesis; L-histidine from 5-phospho-alpha-D-ribose 1-diphosphate: step 1/9. Functionally, required for the first step of histidine biosynthesis. May allow the feedback regulation of ATP phosphoribosyltransferase activity by histidine. The sequence is that of ATP phosphoribosyltransferase regulatory subunit from Carboxydothermus hydrogenoformans (strain ATCC BAA-161 / DSM 6008 / Z-2901).